Consider the following 534-residue polypeptide: CTP synthase (534 aa).

The tract at residues 1–268 is amidoligase domain; that stretch reads MAAKYIFVTG…DQIVCDHLQL (268 aa). Residue Ser14 participates in CTP binding. Residue Ser14 coordinates UTP. 15 to 20 lines the ATP pocket; that stretch reads SLGKGI. Tyr55 serves as a coordination point for L-glutamine. Residue Asp72 participates in ATP binding. 2 residues coordinate Mg(2+): Asp72 and Glu142. CTP-binding positions include 149 to 151, 189 to 194, and Lys225; these read DIE and KSKPTQ. UTP is bound by residues 189 to 194 and Lys225; that span reads KSKPTQ. In terms of domain architecture, Glutamine amidotransferase type-1 spans 293–534; it reads RIAIVGKYVE…FVRNALAAQA (242 aa). Gly355 serves as a coordination point for L-glutamine. Cys382 functions as the Nucleophile; for glutamine hydrolysis in the catalytic mechanism. L-glutamine is bound by residues 383–386, Glu406, and Arg463; that span reads LGMQ. Catalysis depends on residues His508 and Glu510.

The protein belongs to the CTP synthase family. As to quaternary structure, homotetramer.

The enzyme catalyses UTP + L-glutamine + ATP + H2O = CTP + L-glutamate + ADP + phosphate + 2 H(+). The catalysed reaction is L-glutamine + H2O = L-glutamate + NH4(+). It catalyses the reaction UTP + NH4(+) + ATP = CTP + ADP + phosphate + 2 H(+). The protein operates within pyrimidine metabolism; CTP biosynthesis via de novo pathway; CTP from UDP: step 2/2. Allosterically activated by GTP, when glutamine is the substrate; GTP has no effect on the reaction when ammonia is the substrate. The allosteric effector GTP functions by stabilizing the protein conformation that binds the tetrahedral intermediate(s) formed during glutamine hydrolysis. Inhibited by the product CTP, via allosteric rather than competitive inhibition. Catalyzes the ATP-dependent amination of UTP to CTP with either L-glutamine or ammonia as the source of nitrogen. Regulates intracellular CTP levels through interactions with the four ribonucleotide triphosphates. The protein is CTP synthase of Shouchella clausii (strain KSM-K16) (Alkalihalobacillus clausii).